A 416-amino-acid polypeptide reads, in one-letter code: Serine hydroxymethyltransferase (416 aa).

(6S)-5,6,7,8-tetrahydrofolate is bound by residues leucine 121 and 125–127; that span reads GHL. N6-(pyridoxal phosphate)lysine is present on lysine 230.

This sequence belongs to the SHMT family. As to quaternary structure, homodimer. It depends on pyridoxal 5'-phosphate as a cofactor.

The protein resides in the cytoplasm. The catalysed reaction is (6R)-5,10-methylene-5,6,7,8-tetrahydrofolate + glycine + H2O = (6S)-5,6,7,8-tetrahydrofolate + L-serine. It functions in the pathway one-carbon metabolism; tetrahydrofolate interconversion. The protein operates within amino-acid biosynthesis; glycine biosynthesis; glycine from L-serine: step 1/1. Functionally, catalyzes the reversible interconversion of serine and glycine with tetrahydrofolate (THF) serving as the one-carbon carrier. This reaction serves as the major source of one-carbon groups required for the biosynthesis of purines, thymidylate, methionine, and other important biomolecules. Also exhibits THF-independent aldolase activity toward beta-hydroxyamino acids, producing glycine and aldehydes, via a retro-aldol mechanism. This is Serine hydroxymethyltransferase from Nitrosomonas europaea (strain ATCC 19718 / CIP 103999 / KCTC 2705 / NBRC 14298).